Consider the following 264-residue polypeptide: S-adenosylmethionine decarboxylase proenzyme (264 aa).

S112 acts as the Schiff-base intermediate with substrate; via pyruvic acid in catalysis. The residue at position 112 (S112) is a Pyruvic acid (Ser); by autocatalysis. H117 functions as the Proton acceptor; for processing activity in the catalytic mechanism. The active-site Proton donor; for catalytic activity is the C140.

Belongs to the prokaryotic AdoMetDC family. Type 2 subfamily. As to quaternary structure, heterooctamer of four alpha and four beta chains arranged as a tetramer of alpha/beta heterodimers. The cofactor is pyruvate. Post-translationally, is synthesized initially as an inactive proenzyme. Formation of the active enzyme involves a self-maturation process in which the active site pyruvoyl group is generated from an internal serine residue via an autocatalytic post-translational modification. Two non-identical subunits are generated from the proenzyme in this reaction, and the pyruvate is formed at the N-terminus of the alpha chain, which is derived from the carboxyl end of the proenzyme. The post-translation cleavage follows an unusual pathway, termed non-hydrolytic serinolysis, in which the side chain hydroxyl group of the serine supplies its oxygen atom to form the C-terminus of the beta chain, while the remainder of the serine residue undergoes an oxidative deamination to produce ammonia and the pyruvoyl group blocking the N-terminus of the alpha chain.

It carries out the reaction S-adenosyl-L-methionine + H(+) = S-adenosyl 3-(methylsulfanyl)propylamine + CO2. It functions in the pathway amine and polyamine biosynthesis; S-adenosylmethioninamine biosynthesis; S-adenosylmethioninamine from S-adenosyl-L-methionine: step 1/1. In terms of biological role, catalyzes the decarboxylation of S-adenosylmethionine to S-adenosylmethioninamine (dcAdoMet), the propylamine donor required for the synthesis of the polyamines spermine and spermidine from the diamine putrescine. The chain is S-adenosylmethionine decarboxylase proenzyme from Shigella dysenteriae serotype 1 (strain Sd197).